Reading from the N-terminus, the 117-residue chain is Immunoglobulin lambda variable 6-57 (117 aa).

The N-terminal stretch at 1-19 (MAWAPLLLTLLAHCTGSWA) is a signal peptide. The tract at residues 20–44 (NFMLTQPHSVSESPGKTVTISCTGS) is framework-1. Residues 20–117 (NFMLTQPHSV…YYCQSYDSSN (98 aa)) enclose the Ig-like domain. A disulfide bridge connects residues Cys41 and Cys110. Positions 45–52 (SGSIASNY) are complementarity-determining-1. The framework-2 stretch occupies residues 53–69 (VQWYQQRPGSAPTTVIY). The disordered stretch occupies residues 65–97 (TTVIYEDNQRPSGVPDRFSGSIDSSSNSASLTI). The segment at 70-72 (EDN) is complementarity-determining-2. The framework-3 stretch occupies residues 73–110 (QRPSGVPDRFSGSIDSSSNSASLTISGLKTEDEADYYC). Over residues 83–97 (SGSIDSSSNSASLTI) the composition is skewed to low complexity. The segment at 111–117 (QSYDSSN) is complementarity-determining-3.

In terms of assembly, immunoglobulins are composed of two identical heavy chains and two identical light chains; disulfide-linked.

It is found in the secreted. The protein resides in the cell membrane. V region of the variable domain of immunoglobulin light chains that participates in the antigen recognition. Immunoglobulins, also known as antibodies, are membrane-bound or secreted glycoproteins produced by B lymphocytes. In the recognition phase of humoral immunity, the membrane-bound immunoglobulins serve as receptors which, upon binding of a specific antigen, trigger the clonal expansion and differentiation of B lymphocytes into immunoglobulins-secreting plasma cells. Secreted immunoglobulins mediate the effector phase of humoral immunity, which results in the elimination of bound antigens. The antigen binding site is formed by the variable domain of one heavy chain, together with that of its associated light chain. Thus, each immunoglobulin has two antigen binding sites with remarkable affinity for a particular antigen. The variable domains are assembled by a process called V-(D)-J rearrangement and can then be subjected to somatic hypermutations which, after exposure to antigen and selection, allow affinity maturation for a particular antigen. The chain is Immunoglobulin lambda variable 6-57 from Homo sapiens (Human).